Here is a 45-residue protein sequence, read N- to C-terminus: Photosystem II reaction center protein K (45 aa).

A propeptide spanning residues 1–8 (MLMSLFLA) is cleaved from the precursor. A helical transmembrane segment spans residues 23–43 (ILPIIPLFFLLLAFVWQAAIG).

It belongs to the PsbK family. In terms of assembly, PSII is composed of 1 copy each of membrane proteins PsbA, PsbB, PsbC, PsbD, PsbE, PsbF, PsbH, PsbI, PsbJ, PsbK, PsbL, PsbM, PsbT, PsbX, PsbY, PsbZ, Psb30/Ycf12, at least 3 peripheral proteins of the oxygen-evolving complex and a large number of cofactors. It forms dimeric complexes.

It is found in the plastid. The protein localises to the cyanelle thylakoid membrane. Functionally, one of the components of the core complex of photosystem II (PSII). PSII is a light-driven water:plastoquinone oxidoreductase that uses light energy to abstract electrons from H(2)O, generating O(2) and a proton gradient subsequently used for ATP formation. It consists of a core antenna complex that captures photons, and an electron transfer chain that converts photonic excitation into a charge separation. This Cyanophora paradoxa protein is Photosystem II reaction center protein K.